Reading from the N-terminus, the 469-residue chain is 3-isopropylmalate dehydratase large subunit (469 aa).

Cys347, Cys408, and Cys411 together coordinate [4Fe-4S] cluster.

The protein belongs to the aconitase/IPM isomerase family. LeuC type 1 subfamily. In terms of assembly, heterodimer of LeuC and LeuD. It depends on [4Fe-4S] cluster as a cofactor.

It carries out the reaction (2R,3S)-3-isopropylmalate = (2S)-2-isopropylmalate. It participates in amino-acid biosynthesis; L-leucine biosynthesis; L-leucine from 3-methyl-2-oxobutanoate: step 2/4. In terms of biological role, catalyzes the isomerization between 2-isopropylmalate and 3-isopropylmalate, via the formation of 2-isopropylmaleate. The chain is 3-isopropylmalate dehydratase large subunit from Actinobacillus succinogenes (strain ATCC 55618 / DSM 22257 / CCUG 43843 / 130Z).